Consider the following 148-residue polypeptide: Auxin-responsive protein SAUR65 (148 aa).

It belongs to the ARG7 family.

It is found in the cell membrane. In terms of biological role, may promote auxin-stimulated organ elongation, such as hypocotyls, stamen filaments and petals. This is Auxin-responsive protein SAUR65 from Arabidopsis thaliana (Mouse-ear cress).